We begin with the raw amino-acid sequence, 259 residues long: NAD kinase (259 aa).

The Proton acceptor role is filled by aspartate 49. Residues 49–50 (DG), arginine 54, 118–119 (NE), aspartate 148, alanine 156, 159–164 (TAYNYS), and alanine 183 each bind NAD(+).

The protein belongs to the NAD kinase family. The cofactor is a divalent metal cation.

It localises to the cytoplasm. The enzyme catalyses NAD(+) + ATP = ADP + NADP(+) + H(+). Functionally, involved in the regulation of the intracellular balance of NAD and NADP, and is a key enzyme in the biosynthesis of NADP. Catalyzes specifically the phosphorylation on 2'-hydroxyl of the adenosine moiety of NAD to yield NADP. This Xylella fastidiosa (strain Temecula1 / ATCC 700964) protein is NAD kinase.